Consider the following 91-residue polypeptide: Probable translocation protein y4yM (91 aa).

2 consecutive transmembrane segments (helical) span residues 15–35 (VVFM…GLTI) and 55–75 (LLVV…PLIE).

Belongs to the FliQ/MopD/SpaQ family.

The protein localises to the cell membrane. Could be involved in the secretion of an unknown factor. The sequence is that of Probable translocation protein y4yM from Sinorhizobium fredii (strain NBRC 101917 / NGR234).